A 635-amino-acid chain; its full sequence is Biosynthetic arginine decarboxylase (635 aa).

Lysine 100 bears the N6-(pyridoxal phosphate)lysine mark. 282-292 provides a ligand contact to substrate; it reads LDIGGGLGVDY.

Belongs to the Orn/Lys/Arg decarboxylase class-II family. SpeA subfamily. It depends on Mg(2+) as a cofactor. Pyridoxal 5'-phosphate serves as cofactor.

It catalyses the reaction L-arginine + H(+) = agmatine + CO2. The protein operates within amine and polyamine biosynthesis; agmatine biosynthesis; agmatine from L-arginine: step 1/1. In terms of biological role, catalyzes the biosynthesis of agmatine from arginine. This Trichlorobacter lovleyi (strain ATCC BAA-1151 / DSM 17278 / SZ) (Geobacter lovleyi) protein is Biosynthetic arginine decarboxylase.